Consider the following 1324-residue polypeptide: Mediator of RNA polymerase II transcription subunit 13 (1324 aa).

Disordered stretches follow at residues 296 to 346, 386 to 455, 535 to 590, 607 to 631, 694 to 816, and 1151 to 1198; these read ESGV…PPEA, FFDD…ATTA, GRFF…EPEI, HDDKPAKKIDSSNDTTNSDGNSNNS, KGGQ…VPSA, and TGSD…PDIY. Positions 298–331 are enriched in polar residues; sequence GVNTNESTAAQPQPAQNGTNSMAPAAGTTNATTQ. Residues 398 to 407 are compositionally biased toward acidic residues; it reads DGDNDNGNDN. The span at 408 to 442 shows a compositional bias: basic and acidic residues; that stretch reads DNDKADAMDVDVKEEAKKEEMIKKETKEEVPVKEE. Residues 546–566 are compositionally biased toward low complexity; that stretch reads DNEGSSDNTGDSSDSGDGSES. 2 stretches are compositionally biased toward basic and acidic residues: residues 567 to 578 and 607 to 617; these read VPRDVKRQKVDE and HDDKPAKKIDS. 2 stretches are compositionally biased toward low complexity: residues 618-631 and 724-743; these read SNDTTNSDGNSNNS and SNASGVPSGSSGAQASQMGA. Over residues 750-784 the composition is skewed to polar residues; that stretch reads LSPSRGATPQPEGSSPETRPSNWTPGITSQVNSAA. Composition is skewed to low complexity over residues 785 to 816 and 1172 to 1184; these read SSPVPLQQHQQQQQSFSPMSPQTPAQAPVPSA and TGAAGAASTGSAP.

Belongs to the Mediator complex subunit 13 family. Component of the SRB8-11 complex, which itself associates with the Mediator complex.

It is found in the nucleus. Its function is as follows. Component of the SRB8-11 complex. The SRB8-11 complex is a regulatory module of the Mediator complex which is itself involved in regulation of basal and activated RNA polymerase II-dependent transcription. The SRB8-11 complex may be involved in the transcriptional repression of a subset of genes regulated by Mediator. It may inhibit the association of the Mediator complex with RNA polymerase II to form the holoenzyme complex. The chain is Mediator of RNA polymerase II transcription subunit 13 (SSN2) from Yarrowia lipolytica (strain CLIB 122 / E 150) (Yeast).